A 345-amino-acid polypeptide reads, in one-letter code: Nuclear distribution protein nudE-like 1 (345 aa).

Residues 27–190 (KQTFQEARDE…LAVRERQQEV (164 aa)) are a coiled coil. The segment at 56–166 (VQAEQRNRDL…LDEKESLLVS (111 aa)) is self-association. The interaction with KATNB1 stretch occupies residues 64-189 (DLQADNQRLK…ELAVRERQQE (126 aa)). Residues 114–133 (YVRELEQANDDLERAKRATI) are required for interaction with PAFAH1B1. The interaction with CENPF stretch occupies residues 175–345 (RDLRQELAVR…SAPGMLPLSV (171 aa)). The tract at residues 189–256 (EVTRKSAPSS…SARISALNIV (68 aa)) is interaction with YWHAE. The segment at 191 to 345 (TRKSAPSSPT…SAPGMLPLSV (155 aa)) is interaction with NEFL. The segment at 195–256 (APSSPTLDCE…SARISALNIV (62 aa)) is interaction with KATNA1. The residue at position 215 (S215) is a Phosphoserine. Positions 217 to 240 (PATPVGKGTENSFPSPKAIPNGFG) are disordered. A Phosphothreonine; by CDK1 and MAPK1 modification is found at T219. The segment at 227 to 278 (NSFPSPKAIPNGFGTSPLTPSARISALNIVGDLLRKVGALESKLAACRNFAK) is interaction with DISC1. S231 is modified (phosphoserine). S242 bears the Phosphoserine; by CDK1 mark. Phosphothreonine; by CDK1 and MAPK1 is present on T245. The tract at residues 256–291 (VGDLLRKVGALESKLAACRNFAKDQASRKSYISGNV) is required for localization to the centrosome and interaction with dynein, dynactin, tubulin gamma, PCM1 and PCNT. Residue C273 is the site of S-palmitoyl cysteine; by ZDHHC2, ZDHHC3 and ZDHHC7 attachment. The segment at 316 to 345 (AVNGFDPAPPPPGLGSSRPLSAPGMLPLSV) is disordered. The span at 329–339 (LGSSRPLSAPG) shows a compositional bias: low complexity. S344 is subject to Phosphoserine.

This sequence belongs to the nudE family. As to quaternary structure, self-associates. Interacts with DISC1, dynein, dynactin, tubulin gamma, KATNA1, KATNB1, microtubules, PAFAH1B1, PCM1, PCNT, and YWHAE. Interacts directly with NEFL and indirectly with NEFH. Interacts (via C-terminus) with CENPF. Interacts with ZNF365. Interacts with PLEKHM1 (via N- and C-terminus). Interacts with GTP-bound RAB9A; the interaction may lead to RAB9A-dynein motor tethering. Post-translationally, phosphorylated in mitosis. Can be phosphorylated by CDK1, CDK5 and MAPK1. Phosphorylation by CDK5 promotes interaction with KATNA1 and YWHAE. In terms of processing, palmitoylation at Cys-273 reduces affinity for dynein. As to expression, expressed at low levels in heart, hypothalamus, liver, lung, spleen and stomach. Expressed at higher levels in testis and brain. Within the brain, expressed in cerebellum, cerebral stem, cortex and striatum.

Its subcellular location is the cytoplasm. It is found in the cytoskeleton. The protein localises to the microtubule organizing center. It localises to the centrosome. The protein resides in the chromosome. Its subcellular location is the centromere. It is found in the kinetochore. The protein localises to the spindle. In terms of biological role, required for organization of the cellular microtubule array and microtubule anchoring at the centrosome. May regulate microtubule organization at least in part by targeting the microtubule severing protein KATNA1 to the centrosome. Also positively regulates the activity of the minus-end directed microtubule motor protein dynein. May enhance dynein-mediated microtubule sliding by targeting dynein to the microtubule plus ends. Required for several dynein- and microtubule-dependent processes such as the maintenance of Golgi integrity, the centripetal motion of secretory vesicles and the coupling of the nucleus and centrosome. Also required during brain development for the migration of newly formed neurons from the ventricular/subventricular zone toward the cortical plate. Plays a role, together with DISC1, in the regulation of neurite outgrowth. Required for mitosis in some cell types but appears to be dispensible for mitosis in cortical neuronal progenitors, which instead requires NDE1. Facilitates the polymerization of neurofilaments from the individual subunits NEFH and NEFL. Positively regulates lysosome peripheral distribution and ruffled border formation in osteoclasts. Plays a role, together with DISC1, in the regulation of neurite outgrowth. May act as a RAB9A/B effector that tethers RAB9-associated late endosomes to the dynein motor for their retrograde transport to the trans-Golgi network. The sequence is that of Nuclear distribution protein nudE-like 1 (NDEL1) from Oryctolagus cuniculus (Rabbit).